The following is a 452-amino-acid chain: Phosphatidate cytidylyltransferase, mitochondrial (452 aa).

The protein belongs to the TAM41 family. Requires Mg(2+) as cofactor.

The protein resides in the mitochondrion inner membrane. It catalyses the reaction a 1,2-diacyl-sn-glycero-3-phosphate + CTP + H(+) = a CDP-1,2-diacyl-sn-glycerol + diphosphate. The protein operates within phospholipid metabolism; CDP-diacylglycerol biosynthesis; CDP-diacylglycerol from sn-glycerol 3-phosphate: step 3/3. Catalyzes the conversion of phosphatidic acid (PA) to CDP-diacylglycerol (CDP-DAG), an essential intermediate in the synthesis of phosphatidylglycerol, cardiolipin and phosphatidylinositol. The chain is Phosphatidate cytidylyltransferase, mitochondrial (TAMM41) from Homo sapiens (Human).